The sequence spans 353 residues: Deoxyribonuclease-2-alpha (353 aa).

The first 19 residues, 1-19 (MATLRSLLLAALLWVPAEA), serve as a signal peptide directing secretion. An intrachain disulfide couples Cys-22 to Cys-161. N-linked (GlcNAc...) asparagine glycans are attached at residues Asn-71, Asn-88, Asn-214, and Asn-268. Intrachain disulfides connect Cys-269–Cys-349 and Cys-310–Cys-329. Residue His-297 is part of the active site.

The protein belongs to the DNase II family. As to expression, highly expressed in fetal liver macrophages.

The protein localises to the lysosome. The enzyme catalyses Endonucleolytic cleavage to nucleoside 3'-phosphates and 3'-phosphooligonucleotide end-products.. Hydrolyzes DNA under acidic conditions with a preference for double-stranded DNA. Plays a major role in the clearance of nucleic acids generated through apoptosis, hence preventing autoinflammation. Necessary for proper fetal development and for definitive erythropoiesis in fetal liver and bone marrow, where it degrades nuclear DNA expelled from erythroid precursor cells. The chain is Deoxyribonuclease-2-alpha (Dnase2) from Mus musculus (Mouse).